A 253-amino-acid chain; its full sequence is Oxidoreductase AOL_s00215g277 (253 aa).

A helical membrane pass occupies residues 181 to 203 (FFGYWLTVILGYYIGSLLGYQPF).

This sequence belongs to the oxidoreductase OpS7 family.

It is found in the membrane. Its pathway is secondary metabolite biosynthesis; terpenoid biosynthesis. In terms of biological role, oxidoreductase; part of the gene cluster that mediates the biosynthesis of sesquiterpenyl epoxy-cyclohexenoids (SECs) such as anthrobotrisins and arthrosporols, metabolites that possess a novel hybrid carbon skeleton consisting of a polyketide-derived epoxycyclohexenol combined with a terpenoid-derived monocyclic sesquiterpenol substructure (PKS-PTS hybrid). The SEC pathway plays an important role for fungal soil colonization via decreasing fungal nematode-capturing ability. Within the pathway, the oxidoreductase AOL_s00215g277 seems to play a role in the farnesylation step of toluquinol to produce farnesyl hydroquinone, the hybrid precursor for biosynthesis of SECs. The pathway begins with the biosynthesis of 6-methylsalicylic acid (6-MSA), the first precursor of the polyketide-derived epoxycyclohexenol in arthrosporols, by the polyketide synthase (PKS) AOL_s00215g283 via condensation of 1 acetate and 3 malonate units. The 6-methylsalicylic acid decarboxylase AOL_s00215g281 then catalyzes the decarboxylation of 6-methylsalicylic acid to yield m-cresol. The cytochrome P450 monooxygenase AOL_s00215g282 further oxidizes m-cresol to yield toluquinol. With the assistance of the oxidoreductase AOL_s00215g277, the polyprenyl transferase AOL_s00215g276 catalyzes the farnesylation of toluquinol to produce farnesyl hydroquinone, the hybrid precursor for biosynthesis of SECs. Farnesyl hydroquinone undergoes epoxidation and then subsequent dehydrogenation to form farnesyl epoxy-quinone, the first and simplest SEC. The cytochrome P450 monooxygenase AOL_s00215g278 and the FAD-dependent monooxygenase AOL_s00215g279 might be involved in the oxygenation of the phenol moiety, most likely in the epoxy formation. The cytochrome P450 monooxygenases AOL_s00215g274 and AOL_s00215g280 are involved in specific regional ketone reductions at respectively C-4 and C-1 of farnesyl epoxy-quinone PubMed:33823587. This chain is Oxidoreductase AOL_s00215g277, found in Arthrobotrys oligospora (strain ATCC 24927 / CBS 115.81 / DSM 1491) (Nematode-trapping fungus).